The following is a 276-amino-acid chain: Octopine-binding periplasmic protein (276 aa).

Residues 1-20 form the signal peptide; the sequence is MKLKTILCAALLLVAGQAAA. An intrachain disulfide couples Cys-57 to Cys-64.

The protein belongs to the bacterial solute-binding protein 3 family.

It localises to the periplasm. In terms of biological role, component of the octopine active transport system probably consisting of four subunits: Q, M, P and T. This is Octopine-binding periplasmic protein (occT) from Agrobacterium tumefaciens (strain Ach5).